Reading from the N-terminus, the 252-residue chain is MTTSRCSHLPEVLPDCTSSAPSGKTVEDCSSLVNGQPQYVMQVSAKDGQLLSTVVRTLTTQSSFNDHPMCRICHEGSTQEDLLSPCECTGTLGTIHRSCLEHWLSSSNTSYCELCHFRFSVERKPRPLVEWLRNPGPQHEKRTLFGDMVCFLFITPLATISGWLCLRGAVDHLHFSSRLEAVGLIALTVALFTIYLFWTLVSFRYHCRLYNEWRRTNQRVILVIPKSANLPSAQQSLLGLHSFKRNSKETIV.

The segment at 62–122 (SSFNDHPMCR…ELCHFRFSVE (61 aa)) adopts an RING-CH-type zinc-finger fold. Zn(2+)-binding residues include Cys-70, Cys-73, Cys-86, Cys-88, His-96, Cys-99, Cys-112, and Cys-115. Transmembrane regions (helical) follow at residues 144 to 164 (LFGD…SGWL) and 181 to 201 (AVGL…WTLV).

It is found in the cytoplasmic vesicle membrane. Its subcellular location is the early endosome membrane. It catalyses the reaction S-ubiquitinyl-[E2 ubiquitin-conjugating enzyme]-L-cysteine + [acceptor protein]-L-lysine = [E2 ubiquitin-conjugating enzyme]-L-cysteine + N(6)-ubiquitinyl-[acceptor protein]-L-lysine.. Its pathway is protein modification; protein ubiquitination. E3 ubiquitin-protein ligase which may be involved in endosomal trafficking. E3 ubiquitin ligases accept ubiquitin from an E2 ubiquitin-conjugating enzyme in the form of a thioester and then directly transfer the ubiquitin to targeted substrates. The polypeptide is E3 ubiquitin-protein ligase MARCHF3 (marchf3) (Xenopus laevis (African clawed frog)).